Here is an 85-residue protein sequence, read N- to C-terminus: Putative membrane protein insertion efficiency factor (85 aa).

It belongs to the UPF0161 family.

It localises to the cell inner membrane. Could be involved in insertion of integral membrane proteins into the membrane. The sequence is that of Putative membrane protein insertion efficiency factor from Escherichia coli O6:H1 (strain CFT073 / ATCC 700928 / UPEC).